The chain runs to 268 residues: MICOS complex subunit MIC27 (268 aa).

The transit peptide at 1–27 (MAAIRMGKLTTMPAGLIYASVSVHAAK) directs the protein to the mitochondrion. The Mitochondrial intermembrane portion of the chain corresponds to 28-110 (QEESKKQLVK…YVYLKNPPRD (83 aa)). A helical transmembrane segment spans residues 111–129 (FLPKMGVITVSGLAGLVSA). Over 130–137 (RKGSKFKK) the chain is Mitochondrial matrix. The helical transmembrane segment at 138–155 (ITYPLGLATLGATVCYPV) threads the bilayer. Topologically, residues 156-268 (QSVIIAKVTA…EDIDMYSTRS (113 aa)) are mitochondrial intermembrane. Residues 187-200 (SKEESLPKPKEKTK) are compositionally biased toward basic and acidic residues. Residues 187–268 (SKEESLPKPK…EDIDMYSTRS (82 aa)) are disordered. At serine 204 the chain carries Phosphoserine. Residues 249 to 260 (KLMDHGQSHPED) show a composition bias toward basic and acidic residues.

The protein belongs to the apolipoprotein O/MICOS complex subunit Mic27 family. In terms of assembly, component of the mitochondrial contact site and cristae organizing system (MICOS) complex, composed of at least MICOS10/MIC10, CHCHD3/MIC19, CHCHD6/MIC25, APOOL/MIC27, IMMT/MIC60, APOO/MIC23/MIC26 and MICOS13/MIC13. This complex was also known under the names MINOS or MitOS complex. The MICOS complex associates with mitochondrial outer membrane proteins SAMM50, MTX1 and MTX2 (together described as components of the mitochondrial outer membrane sorting assembly machinery (SAM) complex) and DNAJC11, mitochondrial inner membrane protein TMEM11 and with HSPA9. The MICOS and SAM complexes together with DNAJC11 are part of a large protein complex spanning both membranes termed the mitochondrial intermembrane space bridging (MIB) complex. Interacts with MICOS10/MIC10, IMMT/MIC60 and APOO/MIC23/MIC26.

It localises to the mitochondrion inner membrane. It is found in the mitochondrion. Component of the MICOS complex, a large protein complex of the mitochondrial inner membrane that plays crucial roles in the maintenance of crista junctions, inner membrane architecture, and formation of contact sites to the outer membrane. Specifically binds to cardiolipin (in vitro) but not to the precursor lipid phosphatidylglycerol. Plays a crucial role in crista junction formation and mitochondrial function,. The polypeptide is MICOS complex subunit MIC27 (APOOL) (Homo sapiens (Human)).